Reading from the N-terminus, the 451-residue chain is tRNA modification GTPase MnmE (451 aa).

Residues R23, E80, and K119 each coordinate (6S)-5-formyl-5,6,7,8-tetrahydrofolate. Positions G215–G372 constitute a TrmE-type G domain. N225 is a binding site for K(+). GTP-binding positions include N225–S230, T244–T250, and D269–G272. S229 is a binding site for Mg(2+). Positions 244, 246, and 249 each coordinate K(+). T250 lines the Mg(2+) pocket. K451 provides a ligand contact to (6S)-5-formyl-5,6,7,8-tetrahydrofolate.

It belongs to the TRAFAC class TrmE-Era-EngA-EngB-Septin-like GTPase superfamily. TrmE GTPase family. In terms of assembly, homodimer. Heterotetramer of two MnmE and two MnmG subunits. Requires K(+) as cofactor.

It is found in the cytoplasm. In terms of biological role, exhibits a very high intrinsic GTPase hydrolysis rate. Involved in the addition of a carboxymethylaminomethyl (cmnm) group at the wobble position (U34) of certain tRNAs, forming tRNA-cmnm(5)s(2)U34. This is tRNA modification GTPase MnmE from Nitrosomonas europaea (strain ATCC 19718 / CIP 103999 / KCTC 2705 / NBRC 14298).